A 344-amino-acid polypeptide reads, in one-letter code: Anthranilate phosphoribosyltransferase (344 aa).

Residues Gly-81, 84–85, Ser-89, 91–94, 109–117, and Ala-121 each bind 5-phospho-alpha-D-ribose 1-diphosphate; these read GD, NIST, and KHGNRALSS. Gly-81 contacts anthranilate. Ser-93 provides a ligand contact to Mg(2+). An anthranilate-binding site is contributed by Asn-112. Arg-167 is a binding site for anthranilate. Residues Asp-226 and Glu-227 each contribute to the Mg(2+) site.

It belongs to the anthranilate phosphoribosyltransferase family. Homodimer. Mg(2+) is required as a cofactor.

The catalysed reaction is N-(5-phospho-beta-D-ribosyl)anthranilate + diphosphate = 5-phospho-alpha-D-ribose 1-diphosphate + anthranilate. It participates in amino-acid biosynthesis; L-tryptophan biosynthesis; L-tryptophan from chorismate: step 2/5. In terms of biological role, catalyzes the transfer of the phosphoribosyl group of 5-phosphorylribose-1-pyrophosphate (PRPP) to anthranilate to yield N-(5'-phosphoribosyl)-anthranilate (PRA). This Xanthobacter autotrophicus (strain ATCC BAA-1158 / Py2) protein is Anthranilate phosphoribosyltransferase.